The primary structure comprises 1096 residues: Phospholipase D zeta 1 (1096 aa).

Ala-2 carries the N-acetylalanine modification. The PX domain occupies 50-204 (PKAVIVSVSR…REVCRFLEVS (155 aa)). Residues 131–152 (VQDEDADEVPLHQDESAKNRDV) are disordered. Over residues 139 to 151 (VPLHQDESAKNRD) the composition is skewed to basic and acidic residues. In terms of domain architecture, PH spans 234–342 (DDSNRCCGCC…WVASINDAAL (109 aa)). The region spanning 477–504 (YLWSHHEKLVIVDNQVCFIGGLDLCFGR) is the PLD phosphodiesterase 1 domain. Residues His-482, Lys-484, and Asp-489 contribute to the active site. The span at 607–632 (GRQEESDIESKKEEDSIRGIRRDDSF) shows a compositional bias: basic and acidic residues. The disordered stretch occupies residues 607 to 691 (GRQEESDIES…DGDTPMRGFV (85 aa)). One can recognise a PLD phosphodiesterase 2 domain in the interval 892–919 (SQVYVHSKIMIVDDRAALIGSANINDRS). Residues His-897, Lys-899, and Asp-904 contribute to the active site.

The protein belongs to the phospholipase D family. PXPH-PLD subfamily. Does not require Ca(2+) or any other cation for activity. serves as cofactor. Expressed in inflorescences, flowers, siliques, stems, leaves, and roots. Highest expression in roots.

The protein resides in the cytoplasmic vesicle. The catalysed reaction is a 1,2-diacyl-sn-glycero-3-phosphocholine + H2O = a 1,2-diacyl-sn-glycero-3-phosphate + choline + H(+). Calcium-independent and PIP2-dependent. Hydrolyzes glycerol-phospholipids at the terminal phosphodiesteric bond to generate phosphatidic acids (PA). Phosphatidylcholine-selective. Regulates root-hair morphogenesis. Contributes to the supply of inorganic phosphorus for cell metabolism and diacylglycerol moieties for galactolipid synthesis in phosphorus-starved roots. Involved in root elongation during phosphate limitation. The protein is Phospholipase D zeta 1 of Arabidopsis thaliana (Mouse-ear cress).